The chain runs to 177 residues: Early nodulin-like protein 6 (177 aa).

Positions 1-23 are cleaved as a signal peptide; the sequence is MGGQKIVLLSIFVCFYVFSLVSC. The Phytocyanin domain occupies 24–127; that stretch reads TEFEAGGENG…GQKMIIKVME (104 aa). Asparagine 41 carries an N-linked (GlcNAc...) asparagine glycan. Cysteine 81 and cysteine 115 are joined by a disulfide. Asparagine 149 carries GPI-anchor amidated asparagine lipidation. The propeptide at 150–177 is removed in mature form; that stretch reads HAVRKTSRFLGAGLVTISILVITVFSLV.

Belongs to the early nodulin-like (ENODL) family. As to expression, confined to flowers.

The protein localises to the cell membrane. Its function is as follows. May act as a carbohydrate transporter. This chain is Early nodulin-like protein 6, found in Arabidopsis thaliana (Mouse-ear cress).